The chain runs to 148 residues: ASCH domain-containing ribonuclease (148 aa).

The ASCH domain maps to 13 to 70; it reads SLWPEFAKAIVSGKKTVEFRRRIPLPALSARIWIYATRPVKSVIGFAYLEAIVQGDVN.

The cofactor is Mn(2+). It depends on Ni(2+) as a cofactor.

Functionally, shows sequence-specific endoribonuclease activity towards single-stranded RNA (ssRNA), with a preference for the bond between pyrimidine and adenine nucleotides. May also have 5'-exonuclease activity. The chain is ASCH domain-containing ribonuclease from Zymomonas mobilis subsp. mobilis (strain ATCC 10988 / DSM 424 / LMG 404 / NCIMB 8938 / NRRL B-806 / ZM1).